A 171-amino-acid polypeptide reads, in one-letter code: Shikimate kinase (171 aa).

ATP is bound at residue 13 to 18 (GVGKST). Ser-17 serves as a coordination point for Mg(2+). Substrate-binding residues include Asp-35, Arg-59, and Gly-81. Arg-118 serves as a coordination point for ATP. Arg-136 is a substrate binding site. Arg-153 contributes to the ATP binding site.

The protein belongs to the shikimate kinase family. As to quaternary structure, monomer. The cofactor is Mg(2+).

It localises to the cytoplasm. It catalyses the reaction shikimate + ATP = 3-phosphoshikimate + ADP + H(+). It functions in the pathway metabolic intermediate biosynthesis; chorismate biosynthesis; chorismate from D-erythrose 4-phosphate and phosphoenolpyruvate: step 5/7. Its function is as follows. Catalyzes the specific phosphorylation of the 3-hydroxyl group of shikimic acid using ATP as a cosubstrate. The chain is Shikimate kinase from Streptomyces coelicolor (strain ATCC BAA-471 / A3(2) / M145).